The primary structure comprises 2094 residues: Non-reducing polyketide synthase ustP (2094 aa).

Residues 9–243 (VFGDLSVPYH…GKIQVGGLFH (235 aa)) form an N-terminal acylcarrier protein transacylase (SAT) domain region. The disordered stretch occupies residues 357–377 (NTAGVDSSSRGSGHADAEKQP). In terms of domain architecture, Ketosynthase family 3 (KS3) spans 379 to 813 (RSKIAIIGFS…GGNSSVLVED (435 aa)). Residues Cys551, His686, and His727 each act as for beta-ketoacyl synthase activity in the active site. Residues 914–1227 (FSFTGQGSQY…EDDCKIFTPA (314 aa)) are malonyl-CoA:ACP transacylase (MAT) domain. The active-site For acyl/malonyl transferase activity is Ser1004. The interval 1305 to 1629 (TTSVQYITAE…QRKVLDLVLP (325 aa)) is product template (PT) domain. The N-terminal hotdog fold stretch occupies residues 1308 to 1445 (VQYITAESYG…CSGFFTDKSR (138 aa)). A PKS/mFAS DH domain is found at 1308-1625 (VQYITAESYG…FAAVQRKVLD (318 aa)). His1341 (proton acceptor; for dehydratase activity) is an active-site residue. Positions 1473–1625 (GSVHMIKTGM…FAAVQRKVLD (153 aa)) are C-terminal hotdog fold. Catalysis depends on Asp1536, which acts as the Proton donor; for dehydratase activity. Residues 1644-1671 (AAAAPSQRQQQQQQQQQQQPAQPVAASQ) show a composition bias toward low complexity. The disordered stretch occupies residues 1644-1689 (AAAAPSQRQQQQQQQQQQQPAQPVAASQESGMDDMPPTLVPSEKKD). Positions 1689–1763 (DVPSEKLKVI…ELVRHILGSS (75 aa)) constitute a Carrier domain. Ser1723 carries the post-translational modification O-(pantetheine 4'-phosphoryl)serine. A compositionally biased stretch (polar residues) spans 1762 to 1778 (SSTPSSDSGPATPSITP). The disordered stretch occupies residues 1762 to 1782 (SSTPSSDSGPATPSITPLQEP). Residues 1844 to 2069 (KVWLFPDGSG…GVVEGAHHFS (226 aa)) form a claisen cyclase domain region. The For Claisen cyclase activity role is filled by Ser1916.

It carries out the reaction 6 malonyl-CoA + acetyl-CoA + 6 H(+) = naphtopyrone YWA1 + 6 CO2 + 7 CoA + H2O. Its pathway is secondary metabolite biosynthesis. Its function is as follows. Non-reducing polyketide synthase; part of the gene cluster that mediates the biosynthesis of ustilaginoidins, dimeric gamma-naphthopyrones isolated from different fungal species. The first step in the biosynthesis of ustilaginoidins is the production of gamma-naphthopyrone precursor YWA1 by the non-reducing polyketide synthase ustP, via condensation of one acetyl-CoA starter unit with 6 malonyl-CoA units. YWA1 is then probably substrate of the ustZ to yield norrubrofusarin via a dehydration reaction. A key enzyme in the biosynthetic pathway is the laccase ustL, which catalyzes the oxidative dimerization of norrubrofusarin to ustilaginoidin A. It can produce the M- and P-atropisomers in varying amounts, depending on the reaction conditions. For the biosynthesis of 3-methylustilaginoid in derivatives such as chaetochromin A, a methylated derivative of YWA1 is required. The C-methylation is considered to be catalyzed by ustM, the phosphopantetheine attachment site of which indicates that it acts on the growing polyketide chain before release of the product. For the biosynthesis of chaetochromin A, it is assumed that saturation of the D2 double bond takes place before dimerization, and is probably catalyzed by an external reductase because no candidate gene was identified within the cluster. This chain is Non-reducing polyketide synthase ustP, found in Ustilaginoidea virens (Rice false smut fungus).